The chain runs to 392 residues: MNIHEYQGKGILKQFGVAVPKGIVAFSAEEAKQAAEQLFEEQSSPVVVVKAQIHAGGRGKAGGVKLAKSPEEVFEIAQKMLGATLVTHQTGPEGKEVRRLLIEEGMNIDKEFYLGITLDRTTSSNVLMVSTEGGMEIEKVAEETPEKLLKIHVDPVYGLQGFQARKAAFFLGLQGEQFRNGVKFIEALYNAYTTIDASLAEINPLVITKEGRVLALDAKINFDDNALYRHSDFHDLRDITEEDPLEYEASKSNLNYVRLDGNVGCMVNGAGLAMGTMDLIQLSGGRPANFLDVGGGASSKTVEEGFKIILGDKNVKAILVNIFGGIVRCDRVAGGIIEAAKNIGLKVPVIVRLEGTNATEAQKMLDESGLNLISAKGLRDAAEKVQKALATA.

In terms of domain architecture, ATP-grasp spans 9 to 248 (KGILKQFGVA…ITEEDPLEYE (240 aa)). ATP is bound by residues Lys50, 57-59 (GRG), Glu103, Met106, and Glu111. Positions 203 and 217 each coordinate Mg(2+). Residues Asn268 and 325 to 327 (GIV) contribute to the substrate site.

This sequence belongs to the succinate/malate CoA ligase beta subunit family. Heterotetramer of two alpha and two beta subunits. The cofactor is Mg(2+).

The enzyme catalyses succinate + ATP + CoA = succinyl-CoA + ADP + phosphate. It catalyses the reaction GTP + succinate + CoA = succinyl-CoA + GDP + phosphate. It participates in carbohydrate metabolism; tricarboxylic acid cycle; succinate from succinyl-CoA (ligase route): step 1/1. Its function is as follows. Succinyl-CoA synthetase functions in the citric acid cycle (TCA), coupling the hydrolysis of succinyl-CoA to the synthesis of either ATP or GTP and thus represents the only step of substrate-level phosphorylation in the TCA. The beta subunit provides nucleotide specificity of the enzyme and binds the substrate succinate, while the binding sites for coenzyme A and phosphate are found in the alpha subunit. The polypeptide is Succinate--CoA ligase [ADP-forming] subunit beta (Chlorobaculum tepidum (strain ATCC 49652 / DSM 12025 / NBRC 103806 / TLS) (Chlorobium tepidum)).